Here is a 159-residue protein sequence, read N- to C-terminus: uncharacterized protein (159 aa).

The protein belongs to the mimivirus L15/L51/R83 family.

This is an uncharacterized protein from Acanthamoeba polyphaga mimivirus (APMV).